Here is a 247-residue protein sequence, read N- to C-terminus: Phycobilisome rod-core linker polypeptide CpcG2 (247 aa).

Residues 11–189 form the PBS-linker domain; sequence SSQNQRVPGY…YWRDKLESER (179 aa). The tract at residues 223–247 is disordered; sequence PDTTRNTTPTGIPISVNPSANFPVR.

The protein belongs to the phycobilisome linker protein family. Part of the phycobilisome, a hemidiscoidal structure that is composed of two distinct substructures: a core complex and a number of rods radiating from the core.

The protein resides in the cellular thylakoid membrane. Rod-core linker protein required for attachment of phycocyanin to allophycocyanin in cores of phycobilisomes. Its function is as follows. Linker polypeptides determine the state of aggregation and the location of the disk-shaped phycobiliprotein units within the phycobilisome and modulate their spectroscopic properties in order to mediate a directed and optimal energy transfer. This Nostoc sp. (strain PCC 7120 / SAG 25.82 / UTEX 2576) protein is Phycobilisome rod-core linker polypeptide CpcG2.